The sequence spans 336 residues: Ketoreductase adrE (336 aa).

Position 171 (tyrosine 171) interacts with NADP(+).

The protein belongs to the NAD(P)-dependent epimerase/dehydratase family. Dihydroflavonol-4-reductase subfamily.

It functions in the pathway secondary metabolite biosynthesis; terpenoid biosynthesis. Its function is as follows. Ketoreductase; part of the gene cluster that mediates the biosynthesis of andrastins, meroterpenoid compounds that exhibit inhibitory activity against ras farnesyltransferase, suggesting that they could be promising leads for antitumor agents. The first step of the pathway is the synthesis of 3,5-dimethylorsellinic acid (DMOA) by the polyketide synthase adrD via condensation of one acetyl-CoA starter unit with 3 malonyl-CoA units and 2 methylations. DMAO is then converted to farnesyl-DMAO by the prenyltransferase adrG. The methyltransferase adrK catalyzes the methylation of the carboxyl group of farnesyl-DMAO to farnesyl-DMAO methyl ester which is further converted to epoxyfarnesyl-DMAO methyl ester by the FAD-dependent monooxygenase adrH. The terpene cyclase adrI then catalyzes the carbon skeletal rearrangement to generate the andrastin E, the first compound in the pathway having the andrastin scaffold, with the tetracyclic ring system. The post-cyclization tailoring enzymes adrF, adrE, adrJ, and adrA, are involved in the conversion of andrastin E into andrastin A. The short chain dehydrogenase adrF is responsible for the oxidation of the C-3 a hydroxyl group of andrastin E to yield the corresponding ketone, andrastin D. The ketoreductase adrE stereoselectively reduces the carbonyl moiety to reverse the stereochemistry of the C-3 position to yield andrastin F. The acetyltransferase adrJ is the acetyltransferase that attaches the acetyl group to the C-3 hydroxyl group of andrastin F to yield andrastin C. Finally, the cytochrome P450 monooxygenase adrA catalyzes two sequential oxidation reactions of the C-23 methyl group, to generate the corresponding alcohol andrastin B, and aldehyde andrastin A. The sequence is that of Ketoreductase adrE from Penicillium roqueforti.